The primary structure comprises 166 residues: Lipoprotein signal peptidase (166 aa).

3 consecutive transmembrane segments (helical) span residues 12 to 32 (LPIA…KYLV), 66 to 86 (MEGW…LWLW), and 101 to 121 (AMII…GYVI). Active-site residues include Asp-122 and Asp-140. The helical transmembrane segment at 132-152 (SFAVFNLADSFITVGAGAIIL) threads the bilayer.

The protein belongs to the peptidase A8 family.

It is found in the cell inner membrane. It carries out the reaction Release of signal peptides from bacterial membrane prolipoproteins. Hydrolyzes -Xaa-Yaa-Zaa-|-(S,diacylglyceryl)Cys-, in which Xaa is hydrophobic (preferably Leu), and Yaa (Ala or Ser) and Zaa (Gly or Ala) have small, neutral side chains.. It participates in protein modification; lipoprotein biosynthesis (signal peptide cleavage). This protein specifically catalyzes the removal of signal peptides from prolipoproteins. This Sinorhizobium fredii (strain NBRC 101917 / NGR234) protein is Lipoprotein signal peptidase.